Reading from the N-terminus, the 624-residue chain is Phragmoplastin DRP1E (624 aa).

N-acetylthreonine is present on Thr2. Residues 37–306 (WEALPTVAVV…LESVIRTRIP (270 aa)) enclose the Dynamin-type G domain. The tract at residues 47–54 (GGQSSGKS) is G1 motif. 50 to 55 (SSGKSS) provides a ligand contact to GTP. The segment at 73 to 75 (VTR) is G2 motif. The tract at residues 148 to 151 (DLPG) is G3 motif. The interval 217-220 (TKLD) is G4 motif. Residues 218–223 (KLDLMD) and 248–251 (NRSQ) each bind GTP. The interval 247 to 250 (VNRS) is G5 motif. Positions 532–624 (FRRIASNVSA…DEIDAVAWVR (93 aa)) constitute a GED domain.

Belongs to the TRAFAC class dynamin-like GTPase superfamily. Dynamin/Fzo/YdjA family. Forms homodimer and may homooligomerize and heterooligomerize to form the phragmoplastin complex. Binds to PHIP1. In terms of tissue distribution, ubiquitous.

Its subcellular location is the cytoplasm. It is found in the cytoskeleton. The protein resides in the phragmoplast. It carries out the reaction GTP + H2O = GDP + phosphate + H(+). Microtubule-associated force-producing protein that is targeted to the tubulo-vesicular network of the forming cell plate during cytokinesis. Also plays a major role in plasma membrane maintenance and cell wall integrity with an implication in vesicular trafficking, polar cell expansion, and other aspects of plant growth and development. Has a GTPase activity. The polypeptide is Phragmoplastin DRP1E (Arabidopsis thaliana (Mouse-ear cress)).